A 204-amino-acid polypeptide reads, in one-letter code: ATP-dependent Clp protease proteolytic subunit 1 (204 aa).

S97 functions as the Nucleophile in the catalytic mechanism. H122 is a catalytic residue.

It belongs to the peptidase S14 family. As to quaternary structure, fourteen ClpP subunits assemble into 2 heptameric rings which stack back to back to give a disk-like structure with a central cavity, resembling the structure of eukaryotic proteasomes.

It localises to the cytoplasm. It carries out the reaction Hydrolysis of proteins to small peptides in the presence of ATP and magnesium. alpha-casein is the usual test substrate. In the absence of ATP, only oligopeptides shorter than five residues are hydrolyzed (such as succinyl-Leu-Tyr-|-NHMec, and Leu-Tyr-Leu-|-Tyr-Trp, in which cleavage of the -Tyr-|-Leu- and -Tyr-|-Trp bonds also occurs).. Its function is as follows. Cleaves peptides in various proteins in a process that requires ATP hydrolysis. Has a chymotrypsin-like activity. Plays a major role in the degradation of misfolded proteins. The polypeptide is ATP-dependent Clp protease proteolytic subunit 1 (Nostoc sp. (strain PCC 7120 / SAG 25.82 / UTEX 2576)).